The sequence spans 398 residues: MKKISLLGSTGSIGTQTLDIVNQYPDQFQVVGLATRSNVELLATQVQQFRPEIVAICDESKLGSLKDAIASMDYSPLILAGEQGVAEVARHGDAESVVTGIVGCAGLLPTIAAIEAGKDIALANKETLIAGGPVVLPLIEKHGVKLLPADSEHSAIFQCLQGVPDGGLRRIILTASGGAFRDWPVEQLKYVTVQDALKHPNWSMGQKITVDSATLMNKGLEVIEAHFLFGMDYENIDIVIHPQSIIHSLIEVQDTSVLAQLGWPDMRLPLLYALSWPERIYTDWEQLDLVKAGSLTFREPDHDKYPCMQLAYAAGNAGGAMPAVLNAANEQAVALFLAEKIAFLDIPKVIEKTCDNFRDHNRSQPSLEDILEADKWAREAVLMAAEGLGTENKVVSLK.

NADPH is bound by residues Thr10, Gly11, Ser12, Ile13, Asn38, and Asn124. Position 125 (Lys125) interacts with 1-deoxy-D-xylulose 5-phosphate. Glu126 contacts NADPH. Asp150 serves as a coordination point for Mn(2+). 1-deoxy-D-xylulose 5-phosphate is bound by residues Ser151, Glu152, Ser176, and His199. Residue Glu152 coordinates Mn(2+). Position 205 (Gly205) interacts with NADPH. 1-deoxy-D-xylulose 5-phosphate contacts are provided by Ser212, Asn217, Lys218, and Glu221. A Mn(2+)-binding site is contributed by Glu221.

Belongs to the DXR family. Requires Mg(2+) as cofactor. The cofactor is Mn(2+).

The enzyme catalyses 2-C-methyl-D-erythritol 4-phosphate + NADP(+) = 1-deoxy-D-xylulose 5-phosphate + NADPH + H(+). It functions in the pathway isoprenoid biosynthesis; isopentenyl diphosphate biosynthesis via DXP pathway; isopentenyl diphosphate from 1-deoxy-D-xylulose 5-phosphate: step 1/6. In terms of biological role, catalyzes the NADPH-dependent rearrangement and reduction of 1-deoxy-D-xylulose-5-phosphate (DXP) to 2-C-methyl-D-erythritol 4-phosphate (MEP). This is 1-deoxy-D-xylulose 5-phosphate reductoisomerase from Crocosphaera subtropica (strain ATCC 51142 / BH68) (Cyanothece sp. (strain ATCC 51142)).